Reading from the N-terminus, the 133-residue chain is Antifungal protein ginkbilobin-like protein 1 (133 aa).

An N-terminal signal peptide occupies residues 1–24 (MSMGSFGFALAVMVLAVLVASAAG). One can recognise a Gnk2-homologous domain in the interval 28–133 (TNFVSSACNT…CFIRYEQYSI (106 aa)). 3 disulfide bridges follow: C35–C111, C87–C96, and C99–C124. Position 36 (N36) interacts with alpha-D-mannopyranose. The alpha-D-mannopyranose site is built by R118 and E129.

In terms of biological role, exerts antifungal activity through its carbohydrate-binding specificity. The sequence is that of Antifungal protein ginkbilobin-like protein 1 from Picea sitchensis (Sitka spruce).